We begin with the raw amino-acid sequence, 879 residues long: Phosphoenolpyruvate carboxylase (879 aa).

Catalysis depends on residues His-138 and Lys-545.

The protein belongs to the PEPCase type 1 family. Mg(2+) serves as cofactor.

It carries out the reaction oxaloacetate + phosphate = phosphoenolpyruvate + hydrogencarbonate. Functionally, forms oxaloacetate, a four-carbon dicarboxylic acid source for the tricarboxylic acid cycle. The sequence is that of Phosphoenolpyruvate carboxylase from Haemophilus influenzae (strain 86-028NP).